Here is a 283-residue protein sequence, read N- to C-terminus: Homeobox protein six1a (283 aa).

The segment at residues 124–183 (GEETSYCFKEKSRSVLREWYTHNPYPSPREKRELAEATGLTTTQVSNWFKNRRQRDRAAE) is a DNA-binding region (homeobox). Residues 168–264 (VSNWFKNRRQ…PLHGMQGHPH (97 aa)) are disordered. The span at 179–190 (DRAAEAKERENG) shows a compositional bias: basic and acidic residues. The segment covering 237 to 248 (MNNPAAPAYPMP) has biased composition (low complexity).

The protein belongs to the SIX/Sine oculis homeobox family.

It localises to the nucleus. The protein resides in the cytoplasm. Transcription factor that is involved in the regulation of cell proliferation, apoptosis and embryonic development. Depending on context, functions as a transcriptional repressor or activator. Plays an important role in the development of the inner ear, where it promotes hair cell proliferation and inhibits proliferation of neural progenitor cells. Required for normal myogenesis. Plays a role in the development of fast muscle fibers throughout the body, as well as the development of craniofacial muscles. The sequence is that of Homeobox protein six1a (six1a) from Danio rerio (Zebrafish).